The sequence spans 433 residues: Mannan endo-1,4-beta-mannosidase 2 (433 aa).

An N-terminal signal peptide occupies residues 1–28; that stretch reads MAAPTGNGPVIPILGFLTCVAFIYLSFG. The N-linked (GlcNAc...) asparagine glycan is linked to Asn-46. Trp-98 provides a ligand contact to substrate. Asn-169 carries an N-linked (GlcNAc...) asparagine glycan. Asn-214 contributes to the substrate binding site. The Proton donor role is filled by Glu-215. Residue Tyr-295 coordinates substrate. The active-site Nucleophile is the Glu-335. Residue Trp-377 coordinates substrate.

The protein belongs to the glycosyl hydrolase 5 (cellulase A) family. In terms of tissue distribution, expressed in roots, stems, leaves and seeds.

The protein resides in the secreted. It catalyses the reaction Random hydrolysis of (1-&gt;4)-beta-D-mannosidic linkages in mannans, galactomannans and glucomannans.. The polypeptide is Mannan endo-1,4-beta-mannosidase 2 (MAN2) (Arabidopsis thaliana (Mouse-ear cress)).